Consider the following 159-residue polypeptide: ATP synthase subunit b (159 aa).

The helical transmembrane segment at 2-22 (EFNLVTIGFTIVNFIILMLIL) threads the bilayer.

The protein belongs to the ATPase B chain family. As to quaternary structure, F-type ATPases have 2 components, F(1) - the catalytic core - and F(0) - the membrane proton channel. F(1) has five subunits: alpha(3), beta(3), gamma(1), delta(1), epsilon(1). F(0) has three main subunits: a(1), b(2) and c(10-14). The alpha and beta chains form an alternating ring which encloses part of the gamma chain. F(1) is attached to F(0) by a central stalk formed by the gamma and epsilon chains, while a peripheral stalk is formed by the delta and b chains.

Its subcellular location is the cell membrane. Functionally, f(1)F(0) ATP synthase produces ATP from ADP in the presence of a proton or sodium gradient. F-type ATPases consist of two structural domains, F(1) containing the extramembraneous catalytic core and F(0) containing the membrane proton channel, linked together by a central stalk and a peripheral stalk. During catalysis, ATP synthesis in the catalytic domain of F(1) is coupled via a rotary mechanism of the central stalk subunits to proton translocation. Component of the F(0) channel, it forms part of the peripheral stalk, linking F(1) to F(0). The sequence is that of ATP synthase subunit b from Clostridium acetobutylicum (strain ATCC 824 / DSM 792 / JCM 1419 / IAM 19013 / LMG 5710 / NBRC 13948 / NRRL B-527 / VKM B-1787 / 2291 / W).